The primary structure comprises 126 residues: MSFPIDSIKIKVESHFLAQQSSLLEGKYVFSYTVTIVNLSDINVTLKSRHWIITDANGAESQVKGPGVVGETPTIAPNNAYQYTSGTVFETPVGFMHGRYTMESGLGETFEASIPSFRLAMPGVMQ.

Positions 2–126 constitute an ApaG domain; sequence SFPIDSIKIK…FRLAMPGVMQ (125 aa).

The chain is Protein ApaG from Shewanella denitrificans (strain OS217 / ATCC BAA-1090 / DSM 15013).